A 104-amino-acid chain; its full sequence is Large ribosomal subunit protein uL24 (104 aa).

A compositionally biased stretch (basic and acidic residues) spans I85–R96. Positions I85–K104 are disordered.

It belongs to the universal ribosomal protein uL24 family. As to quaternary structure, part of the 50S ribosomal subunit.

Its function is as follows. One of two assembly initiator proteins, it binds directly to the 5'-end of the 23S rRNA, where it nucleates assembly of the 50S subunit. Functionally, one of the proteins that surrounds the polypeptide exit tunnel on the outside of the subunit. The sequence is that of Large ribosomal subunit protein uL24 from Anaeromyxobacter sp. (strain Fw109-5).